Here is a 432-residue protein sequence, read N- to C-terminus: Phosphoribosylamine--glycine ligase (432 aa).

Residues 110 to 316 form the ATP-grasp domain; that stretch reads RNFMKDNDIE…MIDVMSAVVN (207 aa). 137–194 is an ATP binding site; that stretch reads IEELGSVAIKPAGLTGGKGVKVMGDQLPDTGAAYDYAVSLLDGDNVVVEENLVGEEFT. Mg(2+)-binding residues include Q274, E286, and N288. 3 residues coordinate Mn(2+): Q274, E286, and N288.

The protein belongs to the GARS family. Requires Mg(2+) as cofactor. Mn(2+) serves as cofactor.

The enzyme catalyses 5-phospho-beta-D-ribosylamine + glycine + ATP = N(1)-(5-phospho-beta-D-ribosyl)glycinamide + ADP + phosphate + H(+). Its pathway is purine metabolism; IMP biosynthesis via de novo pathway; N(1)-(5-phospho-D-ribosyl)glycinamide from 5-phospho-alpha-D-ribose 1-diphosphate: step 2/2. The chain is Phosphoribosylamine--glycine ligase from Methanococcoides burtonii (strain DSM 6242 / NBRC 107633 / OCM 468 / ACE-M).